A 1221-amino-acid chain; its full sequence is DNA-directed RNA polymerase subunit beta' (1221 aa).

Zn(2+) is bound by residues cysteine 60, cysteine 62, cysteine 75, and cysteine 78. The Mg(2+) site is built by aspartate 449, aspartate 451, and aspartate 453. Zn(2+) is bound by residues cysteine 820, cysteine 894, cysteine 901, and cysteine 904.

It belongs to the RNA polymerase beta' chain family. As to quaternary structure, the RNAP catalytic core consists of 2 alpha, 1 beta, 1 beta' and 1 omega subunit. When a sigma factor is associated with the core the holoenzyme is formed, which can initiate transcription. Mg(2+) is required as a cofactor. Requires Zn(2+) as cofactor.

It catalyses the reaction RNA(n) + a ribonucleoside 5'-triphosphate = RNA(n+1) + diphosphate. Functionally, DNA-dependent RNA polymerase catalyzes the transcription of DNA into RNA using the four ribonucleoside triphosphates as substrates. This chain is DNA-directed RNA polymerase subunit beta', found in Ligilactobacillus salivarius (strain UCC118) (Lactobacillus salivarius).